The following is a 336-amino-acid chain: Holliday junction branch migration complex subunit RuvB (336 aa).

Positions 4–184 (SDRLISSQSI…FGIVQRLEYY (181 aa)) are large ATPase domain (RuvB-L). ATP-binding positions include isoleucine 23, arginine 24, glycine 65, lysine 68, threonine 69, threonine 70, 131-133 (EDY), arginine 174, tyrosine 184, and arginine 221. A Mg(2+)-binding site is contributed by threonine 69. Positions 185–255 (SVDSLTQIVA…MAQQALEMLE (71 aa)) are small ATPAse domain (RuvB-S). The tract at residues 258-336 (QHGFDLMDRK…HFGFSAIEQE (79 aa)) is head domain (RuvB-H). 2 residues coordinate DNA: arginine 313 and arginine 318.

It belongs to the RuvB family. Homohexamer. Forms an RuvA(8)-RuvB(12)-Holliday junction (HJ) complex. HJ DNA is sandwiched between 2 RuvA tetramers; dsDNA enters through RuvA and exits via RuvB. An RuvB hexamer assembles on each DNA strand where it exits the tetramer. Each RuvB hexamer is contacted by two RuvA subunits (via domain III) on 2 adjacent RuvB subunits; this complex drives branch migration. In the full resolvosome a probable DNA-RuvA(4)-RuvB(12)-RuvC(2) complex forms which resolves the HJ.

The protein resides in the cytoplasm. It catalyses the reaction ATP + H2O = ADP + phosphate + H(+). Its function is as follows. The RuvA-RuvB-RuvC complex processes Holliday junction (HJ) DNA during genetic recombination and DNA repair, while the RuvA-RuvB complex plays an important role in the rescue of blocked DNA replication forks via replication fork reversal (RFR). RuvA specifically binds to HJ cruciform DNA, conferring on it an open structure. The RuvB hexamer acts as an ATP-dependent pump, pulling dsDNA into and through the RuvAB complex. RuvB forms 2 homohexamers on either side of HJ DNA bound by 1 or 2 RuvA tetramers; 4 subunits per hexamer contact DNA at a time. Coordinated motions by a converter formed by DNA-disengaged RuvB subunits stimulates ATP hydrolysis and nucleotide exchange. Immobilization of the converter enables RuvB to convert the ATP-contained energy into a lever motion, pulling 2 nucleotides of DNA out of the RuvA tetramer per ATP hydrolyzed, thus driving DNA branch migration. The RuvB motors rotate together with the DNA substrate, which together with the progressing nucleotide cycle form the mechanistic basis for DNA recombination by continuous HJ branch migration. Branch migration allows RuvC to scan DNA until it finds its consensus sequence, where it cleaves and resolves cruciform DNA. This chain is Holliday junction branch migration complex subunit RuvB, found in Legionella pneumophila (strain Lens).